We begin with the raw amino-acid sequence, 467 residues long: ATP-dependent protease ATPase subunit HslU (467 aa).

Residues V22 and 64 to 69 (GVGKTE) contribute to the ATP site. Residues 149–192 (QTNNPLESLFGGAIPNFGQNNEDEEEPPTEEIKTKRSEIKRQLE) are disordered. Residues 178-192 (EEIKTKRSEIKRQLE) are compositionally biased toward basic and acidic residues. ATP contacts are provided by D280, E345, and R417.

This sequence belongs to the ClpX chaperone family. HslU subfamily. As to quaternary structure, a double ring-shaped homohexamer of HslV is capped on each side by a ring-shaped HslU homohexamer. The assembly of the HslU/HslV complex is dependent on binding of ATP.

The protein localises to the cytoplasm. Its function is as follows. ATPase subunit of a proteasome-like degradation complex; this subunit has chaperone activity. The binding of ATP and its subsequent hydrolysis by HslU are essential for unfolding of protein substrates subsequently hydrolyzed by HslV. HslU recognizes the N-terminal part of its protein substrates and unfolds these before they are guided to HslV for hydrolysis. The sequence is that of ATP-dependent protease ATPase subunit HslU from Staphylococcus aureus (strain Mu3 / ATCC 700698).